Reading from the N-terminus, the 400-residue chain is Enoyl-[acyl-carrier-protein] reductase [NADH] (400 aa).

Residues Gly-48 to Tyr-53, Phe-74 to Glu-75, Asp-111 to Ala-112, and Leu-139 to Ala-140 contribute to the NAD(+) site. Position 225 (Tyr-225) interacts with substrate. Tyr-235 (proton donor) is an active-site residue. NAD(+) is bound by residues Lys-244 and Val-273–Thr-275.

It belongs to the TER reductase family. In terms of assembly, monomer.

It carries out the reaction a 2,3-saturated acyl-[ACP] + NAD(+) = a (2E)-enoyl-[ACP] + NADH + H(+). It functions in the pathway lipid metabolism; fatty acid biosynthesis. Involved in the final reduction of the elongation cycle of fatty acid synthesis (FAS II). Catalyzes the reduction of a carbon-carbon double bond in an enoyl moiety that is covalently linked to an acyl carrier protein (ACP). This Marinomonas sp. (strain MWYL1) protein is Enoyl-[acyl-carrier-protein] reductase [NADH].